Reading from the N-terminus, the 688-residue chain is Beta-galactosidase BglY (688 aa).

R118 contacts substrate. C122 provides a ligand contact to Zn(2+). N156 is a substrate binding site. E157 acts as the Proton donor in catalysis. Positions 162, 164, and 167 each coordinate Zn(2+). The Nucleophile role is filled by E313. Residues W321 and 361–364 (EKFH) contribute to the substrate site.

This sequence belongs to the glycosyl hydrolase 42 family.

It carries out the reaction Hydrolysis of terminal non-reducing beta-D-galactose residues in beta-D-galactosides.. Its activity is regulated as follows. Ca(2+), Mg(2+) and EDTA have little effect on enzyme activity at 1-10 mM. Zn(2+) at 3, 5, 7 or 10 mM inhibits activity by 20%, 30%, 40% and 65%, respectively. Its function is as follows. Hydrolyzes o-nitrophenyl-beta-D-galactopyranoside (ONPG) and p-nitrophenyl-beta-D-fucopyranoside (PNPF), but not p-nitrophenyl-beta-D-glucopyranoside (PNPG), p-nitrophenyl-beta-D-xylopyranoside (PNPX) or p-nitrophenyl-beta-D-arabinopyranoside (PNPA). Also hydrolyzes lactose, including lactose in milk. This is Beta-galactosidase BglY (bglY) from Alicyclobacillus acidocaldarius subsp. acidocaldarius (strain ATCC 27009 / DSM 446 / BCRC 14685 / JCM 5260 / KCTC 1825 / NBRC 15652 / NCIMB 11725 / NRRL B-14509 / 104-IA) (Bacillus acidocaldarius).